We begin with the raw amino-acid sequence, 1191 residues long: Probable inositol polyphosphate 5-phosphatase C9G1.10c (1191 aa).

5 stretches are compositionally biased toward polar residues: residues 1–10, 72–101, 114–135, 151–161, and 181–193; these read MASRQGFSNV, QVSS…NPSN, SDSS…SFVS, SFQSSVQSTKG, and NFSS…SPIS. Positions 1–193 are disordered; it reads MASRQGFSNV…SKAGSSSPIS (193 aa). Ser195 carries the post-translational modification Phosphoserine. 3 disordered regions span residues 205 to 281, 294 to 334, and 355 to 425; these read SQSP…PQPV, SQQL…DASL, and IPEK…SSSS. The span at 268–280 shows a compositional bias: pro residues; that stretch reads TPPPIPSPRPPQP. Positions 302 to 311 are enriched in basic residues; that stretch reads SPRKPPKPPL. 3 stretches are compositionally biased toward polar residues: residues 316-334, 367-382, and 400-413; these read TQRS…DASL, HTLS…SENL, and LATN…VSTE. The segment covering 414-425 has biased composition (low complexity); it reads QSDPSVAASSSS.

This sequence belongs to the inositol 1,4,5-trisphosphate 5-phosphatase family.

It is found in the cytoplasm. This Schizosaccharomyces pombe (strain 972 / ATCC 24843) (Fission yeast) protein is Probable inositol polyphosphate 5-phosphatase C9G1.10c.